We begin with the raw amino-acid sequence, 68 residues long: DNA-directed RNA polymerase subunit Rpo10 (68 aa).

The Zn(2+) site is built by C7, C10, C44, and C45.

The protein belongs to the archaeal Rpo10/eukaryotic RPB10 RNA polymerase subunit family. Part of the RNA polymerase complex. Zn(2+) serves as cofactor.

The protein resides in the cytoplasm. It carries out the reaction RNA(n) + a ribonucleoside 5'-triphosphate = RNA(n+1) + diphosphate. DNA-dependent RNA polymerase (RNAP) catalyzes the transcription of DNA into RNA using the four ribonucleoside triphosphates as substrates. In Methanococcus maripaludis (strain DSM 14266 / JCM 13030 / NBRC 101832 / S2 / LL), this protein is DNA-directed RNA polymerase subunit Rpo10.